A 351-amino-acid chain; its full sequence is Protein RecA (351 aa).

ATP is bound at residue 73-80 (GPESSGKT).

Belongs to the RecA family.

It is found in the cytoplasm. Can catalyze the hydrolysis of ATP in the presence of single-stranded DNA, the ATP-dependent uptake of single-stranded DNA by duplex DNA, and the ATP-dependent hybridization of homologous single-stranded DNAs. It interacts with LexA causing its activation and leading to its autocatalytic cleavage. This is Protein RecA from Herbaspirillum seropedicae.